The sequence spans 465 residues: Poly(A) polymerase I (465 aa).

Catalysis depends on residues Asp-80, Asp-82, and Asp-162. Positions 430 to 465 are disordered; that stretch reads APPEQKGMLNELDDDPAPRRRRSRPRKRAPRREGTV. The segment covering 448-459 has biased composition (basic residues); sequence RRRRSRPRKRAP.

Belongs to the tRNA nucleotidyltransferase/poly(A) polymerase family.

It catalyses the reaction RNA(n) + ATP = RNA(n)-3'-adenine ribonucleotide + diphosphate. In terms of biological role, adds poly(A) tail to the 3' end of many RNAs, which usually targets these RNAs for decay. Plays a significant role in the global control of gene expression, through influencing the rate of transcript degradation, and in the general RNA quality control. The sequence is that of Poly(A) polymerase I from Salmonella typhimurium (strain LT2 / SGSC1412 / ATCC 700720).